Here is a 567-residue protein sequence, read N- to C-terminus: uncharacterized protein (567 aa).

Residues 1–26 form a disordered region; it reads MPSEKATTRHLPGAVETLSPRTGRRP. 6 consecutive transmembrane segments (helical) span residues 57-77, 90-110, 142-162, 173-193, 221-241, and 257-277; these read AILVTNVIGLIVGAMLLTVAF, VSFGIVPGYCVLAFILGTYWL, VALAVLFLWGAAAALWTIIYG, LFSMGVIGVVAATSCYLLTEF, MLVWLLCSGVPNVGVALTAIF, and VLILWAPLLIFGFILMWILAW. The HAMP domain occupies 278–329; that stretch reads LTATPVRVVREALNRVEQGDLSGDLVVFDGTELGELQRGFNRMVEGLRERER. The Guanylate cyclase domain maps to 361-485; it reads AVVFVDIVGS…EPVNEAARLC (125 aa).

Belongs to the adenylyl cyclase class-3 family.

It is found in the cell membrane. This is an uncharacterized protein from Mycobacterium tuberculosis (strain ATCC 25618 / H37Rv).